The chain runs to 209 residues: HTLV-1 basic zipper factor (209 aa).

Residues 41–165 (EEEETVLDGL…KEKMQELGVD (125 aa)) are disordered. Composition is skewed to basic and acidic residues over residues 72–87 (PRGE…AEEK) and 94–160 (REKE…EKMQ). 3 consecutive short sequence motifs (nuclear localization signal) follow at residues 87–92 (KRKRKK), 116–120 (RRKRA), and 137–141 (RRERK).

This sequence belongs to the HTLV-1 HBZ protein family. In terms of assembly, interacts with host ATF4; this interaction inhibits viral RNA transcriptional activation by preventing ATF4 binding to Tax-responsive elements. Interacts with host CREB1; this interaction inhibits host CREB1 transcriptional activity. Interacts with host JUN, JUNB and JUND. Interacts with host EP300 and CREBBP; these interactions inhibit the association of the coactivators with the viral promoter. Interacts with host UBR5; this interaction regulates HBZ protein stability. Interacts with XRCC5 and XRCC6. Interacts with IRF7 and IKBKE; this interaction modulates host interferon signaling. Post-translationally, ubiquitinated by host E3 ligase UBR5 leading to HBZ degradation.

Its subcellular location is the host nucleus. In terms of biological role, enhances viral infectivity and persistence, and facilitates proliferation of HTLV-1-infected lymphocytes. Mechanistically, inhibits Tax-mediated viral replication and NF-kappa-B activation. Plays a role in allowing infected T-cells to escape the cytotoxic T-lymphocyte response by maintaining low levels of viral protein production. Also inhibits host EP300 histone acetyltransferase (HAT) activity, reducing levels of acetylated histone H3 at 'Lys-18' (H3K18ac) in infected cells. Contributes to the accumulation of chromosomal abnormalities by inhibiting double-stranded DNA breaks (DSB) repair through the NHEJ pathway. Participates in the modulation of host immune response at multiple levels contributing to abnormal interferon signaling and viral pathogenesis. This is HTLV-1 basic zipper factor (HBZ) from Human T-cell leukemia virus 1 (isolate Caribbea HS-35 subtype A) (HTLV-1).